We begin with the raw amino-acid sequence, 132 residues long: Phosphoribosyl-AMP cyclohydrolase (132 aa).

Mg(2+) is bound at residue Asp-86. Residue Cys-87 coordinates Zn(2+). Mg(2+)-binding residues include Asp-88 and Asp-90. Zn(2+) contacts are provided by Cys-103 and Cys-110.

The protein belongs to the PRA-CH family. In terms of assembly, homodimer. Mg(2+) serves as cofactor. It depends on Zn(2+) as a cofactor.

It localises to the cytoplasm. It catalyses the reaction 1-(5-phospho-beta-D-ribosyl)-5'-AMP + H2O = 1-(5-phospho-beta-D-ribosyl)-5-[(5-phospho-beta-D-ribosylamino)methylideneamino]imidazole-4-carboxamide. It participates in amino-acid biosynthesis; L-histidine biosynthesis; L-histidine from 5-phospho-alpha-D-ribose 1-diphosphate: step 3/9. Its function is as follows. Catalyzes the hydrolysis of the adenine ring of phosphoribosyl-AMP. In Haloquadratum walsbyi (strain DSM 16790 / HBSQ001), this protein is Phosphoribosyl-AMP cyclohydrolase.